The sequence spans 390 residues: Putative nickel insertion protein (390 aa).

It belongs to the LarC family.

This chain is Putative nickel insertion protein, found in Geotalea uraniireducens (strain Rf4) (Geobacter uraniireducens).